Here is a 236-residue protein sequence, read N- to C-terminus: GTP cyclohydrolase 1 (236 aa).

The interval 1-52 is disordered; sequence MAAARSCNGYARREGPPSPKLGTEKPRVSAGSGGSGDGWRGERPRSEEDNEL. The Zn(2+) site is built by Cys-127, His-130, and Cys-198.

It belongs to the GTP cyclohydrolase I family. In terms of assembly, toroid-shaped homodecamer, composed of two pentamers of five dimers.

The protein localises to the cytoplasm. Its subcellular location is the nucleus. The enzyme catalyses GTP + H2O = 7,8-dihydroneopterin 3'-triphosphate + formate + H(+). Its pathway is cofactor biosynthesis; 7,8-dihydroneopterin triphosphate biosynthesis; 7,8-dihydroneopterin triphosphate from GTP: step 1/1. Its activity is regulated as follows. GTP shows a positive allosteric effect, and tetrahydrobiopterin inhibits the enzyme activity. Zinc is required for catalytic activity. Inhibited by Mg(2+). In terms of biological role, may positively regulate nitric oxide synthesis in endothelial cells. May be involved in dopamine synthesis. May modify pain sensitivity and persistence. The sequence is that of GTP cyclohydrolase 1 (GCH1) from Gallus gallus (Chicken).